Reading from the N-terminus, the 564-residue chain is Bifunctional protein CrtB/UppS (564 aa).

Asp-329 is a catalytic residue. Asp-329 provides a ligand contact to Mg(2+). Residues 330–333 (GNRR), Trp-334, His-346, and 374–376 (STE) contribute to the substrate site. Residue Asn-377 is the Proton acceptor of the active site. Residues Trp-378, Arg-380, Arg-497, and 502–504 (RIS) contribute to the substrate site. Glu-515 contributes to the Mg(2+) binding site.

This sequence in the N-terminal section; belongs to the phytoene/squalene synthase family. In the C-terminal section; belongs to the UPP synthase family. Homodimer. It depends on Mg(2+) as a cofactor.

The catalysed reaction is 2 (2E,6E,10E)-geranylgeranyl diphosphate = 15-cis-phytoene + 2 diphosphate. It functions in the pathway carotenoid biosynthesis; phytoene biosynthesis; all-trans-phytoene from geranylgeranyl diphosphate: step 1/1. Catalyzes the reaction from prephytoene diphosphate to phytoene. In terms of biological role, catalyzes the condensation of isopentenyl diphosphate (IPP) with allylic pyrophosphates generating different type of terpenoids. The chain is Bifunctional protein CrtB/UppS (crtB/uppS3) from Streptomyces coelicolor (strain ATCC BAA-471 / A3(2) / M145).